Here is a 430-residue protein sequence, read N- to C-terminus: MNTADITAYMQNVGKEARAASRALAAANTGDKNAALMAIHDVLKNAKQDILSANKIDMDNGQKNDLDAALLDRLELNDARFDGMLQGLKDVAALPDPIGEVTDMTYRPSGIHLGKMRVPLGVVGMIYESRPNVTLEAASLALKSGNAIILRGGSEAFESNQAIAKCILEGLKKVGMSEYSVQVLETTDRAAVGELITMTDYVDVIVPRGGKGLIERISRDARVPVIKHLDGNCHTFIDSDADPEIAIKVSVNAKTHRYGTCNTMETLLVDEAIANELLPKIAEAIVKADDAMQLRLDDKAQAILNDNTTLKGHLSAATAEDWDTEYLAPILAIKILSGIDEAIEHINTHGSHHTDVIITDNYTKSQRFIREVDSASVMINASSRFADGFEYGLGAEIGISTDKIHARGPVGLEGLTSQKWIVYGHGETRA.

This sequence belongs to the gamma-glutamyl phosphate reductase family.

Its subcellular location is the cytoplasm. It carries out the reaction L-glutamate 5-semialdehyde + phosphate + NADP(+) = L-glutamyl 5-phosphate + NADPH + H(+). It participates in amino-acid biosynthesis; L-proline biosynthesis; L-glutamate 5-semialdehyde from L-glutamate: step 2/2. Functionally, catalyzes the NADPH-dependent reduction of L-glutamate 5-phosphate into L-glutamate 5-semialdehyde and phosphate. The product spontaneously undergoes cyclization to form 1-pyrroline-5-carboxylate. This chain is Gamma-glutamyl phosphate reductase, found in Psychrobacter arcticus (strain DSM 17307 / VKM B-2377 / 273-4).